The chain runs to 282 residues: MQQPFNYPYPQIFWVDSSATSPWASPGSVFPCPASVPGRPGQRRPPPPPPPPPPPPTLLPSRPLPPLPPPSLKKKRDHNAGLCLLVMFFMVLVALVGLGLGMFQLFHLQKELTELRESASQRHTESSLEKQIGHPNLPSEKKELRKVAHLTGKPNSRSIPLEWEDTYGIALVSGVKYMKGSLVINDTGLYFVYSKVYFRGQYCNNQPLSHKVYTRNSRYPQDLVLMEGKMMNYCTTGQMWARSSYLGAVFNLTSADHLYVNVSELSLVNFEESKTFFGLYKL.

At methionine 1–leucine 82 the chain is on the cytoplasmic side. The segment at phenylalanine 30–lysine 73 is disordered. The segment covering arginine 43 to serine 71 has biased composition (pro residues). The chain crosses the membrane as a helical; Signal-anchor for type II membrane protein span at residues cysteine 83–phenylalanine 103. Over glutamine 104–leucine 282 the chain is Extracellular. Residues alanine 119 to isoleucine 132 are compositionally biased toward basic and acidic residues. Residues alanine 119–glutamate 140 form a disordered region. Positions lysine 146 to leucine 282 constitute a THD domain. Asparagine 185 is a glycosylation site (N-linked (GlcNAc...) asparagine). Cysteine 203 and cysteine 234 are joined by a disulfide. 2 N-linked (GlcNAc...) asparagine glycosylation sites follow: asparagine 251 and asparagine 261.

Belongs to the tumor necrosis factor family. Homotrimer. Interacts with ARHGAP9, BAIAP2L1, BTK, CACNB3, CACNB4, CRK, DLG2, DNMBP, DOCK4, EPS8L3, FGR, FYB1, FYN, HCK, ITK, ITSN2, KALRN, LYN, MACC1, MIA, MPP4, MYO15A, NCF1, NCK1, NCK2, NCKIPSD, OSTF1, PIK3R1, PSTPIP1, RIMBP3C, SAMSN1, SH3GL3, SH3PXD2B, SH3PXD2A, SH3RF2, SKAP2, SNX33, SNX9, SORBS3, SPTA1, SRC, SRGAP1, SRGAP2, SRGAP3, TEC, TJP3 and YES1. In terms of processing, the soluble form derives from the membrane form by proteolytic processing. The membrane-bound form undergoes two successive intramembrane proteolytic cleavages. The first one is processed by ADAM10 producing an N-terminal fragment, which lacks the receptor-binding extracellular domain. This ADAM10-processed FasL (FasL APL) remnant form is still membrane anchored and further processed by SPPL2A that liberates the FasL intracellular domain (FasL ICD). FasL shedding by ADAM10 is a prerequisite for subsequent intramembrane cleavage by SPPL2A in T-cells. Post-translationally, phosphorylated by FGR on tyrosine residues; this is required for ubiquitination and subsequent internalization. N-glycosylated. Glycosylation enhances apoptotic activity. In terms of processing, monoubiquitinated.

The protein resides in the cell membrane. It localises to the cytoplasmic vesicle lumen. Its subcellular location is the lysosome lumen. It is found in the secreted. The protein localises to the nucleus. Functionally, cytokine that binds to TNFRSF6/FAS, a receptor that transduces the apoptotic signal into cells. Involved in cytotoxic T-cell-mediated apoptosis, natural killer cell-mediated apoptosis and in T-cell development. Initiates fratricidal/suicidal activation-induced cell death (AICD) in antigen-activated T-cells contributing to the termination of immune responses. TNFRSF6/FAS-mediated apoptosis also has a role in the induction of peripheral tolerance. Binds to TNFRSF6B/DcR3, a decoy receptor that blocks apoptosis. In terms of biological role, induces FAS-mediated activation of NF-kappa-B, initiating non-apoptotic signaling pathways. Can induce apoptosis but does not appear to be essential for this process. Cytoplasmic form induces gene transcription inhibition. This is Tumor necrosis factor ligand superfamily member 6 (FASLG) from Sus scrofa (Pig).